A 344-amino-acid chain; its full sequence is Heat-inducible transcription repressor HrcA (344 aa).

Belongs to the HrcA family.

Functionally, negative regulator of class I heat shock genes (grpE-dnaK-dnaJ and groELS operons). Prevents heat-shock induction of these operons. The sequence is that of Heat-inducible transcription repressor HrcA from Streptococcus uberis (strain ATCC BAA-854 / 0140J).